The chain runs to 284 residues: Zinc finger protein ZAT3 (284 aa).

A compositionally biased stretch (basic and acidic residues) spans 1-12 (MNNNHSYDDRSF). Residues 1–76 (MNNNHSYDDR…KPDPNAPKIT (76 aa)) are disordered. The segment covering 18 to 37 (PSNTSNPNPNLQFALSSSYD) has biased composition (polar residues). Low complexity predominate over residues 47-62 (TVASSSSSSPKSASKP). 3 C2H2-type zinc fingers span residues 77 to 99 (RPCTECGRKFWSWKALFGHMRCH), 162 to 184 (FECGGCKKVFGSHQALGGHRASH), and 222 to 244 (HKCNICFRVFSSGQALGGHMRCH).

As to quaternary structure, interacts (via the EAR motif) with TPL. As to expression, expressed exclusively in pollen.

Its subcellular location is the nucleus. In terms of biological role, mediates the regulation of male germ cell division by DUO1. The polypeptide is Zinc finger protein ZAT3 (Arabidopsis thaliana (Mouse-ear cress)).